The primary structure comprises 297 residues: Nucleotide-binding protein Bphyt_0592 (297 aa).

8 to 15 (GISGSGKS) contacts ATP. GTP is bound at residue 57–60 (DARS).

The protein belongs to the RapZ-like family.

Displays ATPase and GTPase activities. The polypeptide is Nucleotide-binding protein Bphyt_0592 (Paraburkholderia phytofirmans (strain DSM 17436 / LMG 22146 / PsJN) (Burkholderia phytofirmans)).